Here is a 175-residue protein sequence, read N- to C-terminus: General stress protein 14 (175 aa).

It belongs to the NAD(P)H dehydrogenase (quinone) family.

This Bacillus subtilis (strain 168) protein is General stress protein 14 (ywrO).